Consider the following 453-residue polypeptide: Tubulin alpha chain (453 aa).

Gln-11 serves as a coordination point for GTP. Lys-40 carries the post-translational modification N6-acetyllysine. GTP contacts are provided by Glu-71, Gly-144, Thr-145, Thr-179, Asn-206, and Asn-228. Glu-71 serves as a coordination point for Mg(2+). Residue Glu-254 is part of the active site.

The protein belongs to the tubulin family. As to quaternary structure, dimer of alpha and beta chains. A typical microtubule is a hollow water-filled tube with an outer diameter of 25 nm and an inner diameter of 15 nM. Alpha-beta heterodimers associate head-to-tail to form protofilaments running lengthwise along the microtubule wall with the beta-tubulin subunit facing the microtubule plus end conferring a structural polarity. Microtubules usually have 13 protofilaments but different protofilament numbers can be found in some organisms and specialized cells. Requires Mg(2+) as cofactor. In terms of processing, undergoes a tyrosination/detyrosination cycle, the cyclic removal and re-addition of a C-terminal tyrosine residue by the enzymes tubulin tyrosine carboxypeptidase (TTCP) and tubulin tyrosine ligase (TTL), respectively. Acetylation of alpha chains at Lys-40 stabilizes microtubules and affects affinity and processivity of microtubule motors. This modification has a role in multiple cellular functions, ranging from cell motility, cell cycle progression or cell differentiation to intracellular trafficking and signaling.

It is found in the cytoplasm. The protein resides in the cytoskeleton. It carries out the reaction GTP + H2O = GDP + phosphate + H(+). Functionally, tubulin is the major constituent of microtubules, a cylinder consisting of laterally associated linear protofilaments composed of alpha- and beta-tubulin heterodimers. Microtubules grow by the addition of GTP-tubulin dimers to the microtubule end, where a stabilizing cap forms. Below the cap, tubulin dimers are in GDP-bound state, owing to GTPase activity of alpha-tubulin. The sequence is that of Tubulin alpha chain (TUBA) from Neospora caninum (Coccidian parasite).